The sequence spans 129 residues: MARVKRALNAQKKRRTVLKASKGYRGQRSRLYRKAKEQQLHSLTYAYRDRKARKGDFRKLWITRINAAARLNGITYNRLIQGLKAAGVEVDRKNLAEIAVSDAAAFAALAEVAKAALPADVNAPSGEAA.

It belongs to the bacterial ribosomal protein bL20 family.

Binds directly to 23S ribosomal RNA and is necessary for the in vitro assembly process of the 50S ribosomal subunit. It is not involved in the protein synthesizing functions of that subunit. The sequence is that of Large ribosomal subunit protein bL20 from Mycolicibacterium gilvum (strain PYR-GCK) (Mycobacterium gilvum (strain PYR-GCK)).